Here is a 139-residue protein sequence, read N- to C-terminus: Large-conductance mechanosensitive channel (139 aa).

A run of 2 helical transmembrane segments spans residues 14–34 (VIDLAVGVIVGAAFTAIINSL) and 81–101 (GSFLTAVINFLLIAFVVFMIV).

It belongs to the MscL family. In terms of assembly, homopentamer.

It is found in the cell membrane. In terms of biological role, channel that opens in response to stretch forces in the membrane lipid bilayer. May participate in the regulation of osmotic pressure changes within the cell. The chain is Large-conductance mechanosensitive channel from Chloroflexus aurantiacus (strain ATCC 29366 / DSM 635 / J-10-fl).